Consider the following 485-residue polypeptide: Aspartyl/glutamyl-tRNA(Asn/Gln) amidotransferase subunit B (485 aa).

The protein belongs to the GatB/GatE family. GatB subfamily. As to quaternary structure, heterotrimer of A, B and C subunits.

It carries out the reaction L-glutamyl-tRNA(Gln) + L-glutamine + ATP + H2O = L-glutaminyl-tRNA(Gln) + L-glutamate + ADP + phosphate + H(+). The catalysed reaction is L-aspartyl-tRNA(Asn) + L-glutamine + ATP + H2O = L-asparaginyl-tRNA(Asn) + L-glutamate + ADP + phosphate + 2 H(+). Its function is as follows. Allows the formation of correctly charged Asn-tRNA(Asn) or Gln-tRNA(Gln) through the transamidation of misacylated Asp-tRNA(Asn) or Glu-tRNA(Gln) in organisms which lack either or both of asparaginyl-tRNA or glutaminyl-tRNA synthetases. The reaction takes place in the presence of glutamine and ATP through an activated phospho-Asp-tRNA(Asn) or phospho-Glu-tRNA(Gln). The polypeptide is Aspartyl/glutamyl-tRNA(Asn/Gln) amidotransferase subunit B (Borrelia recurrentis (strain A1)).